A 202-amino-acid chain; its full sequence is MTSYAVNPQSIKVHVEAALGDLLISSVLRLDELTVVVDGAHYLQAAKILRDDPNCRFEQLMDLCGVDYSTYKDQPQTGLRYCVVSHLLSVSLNQRVRLKVFAPDDNLPVVQSLCDVWSSANWFEREAFDLFGIVFEGHADLRRILTDYGFVGHPFRKDFPVSGHVEMRYDAELKRVVYQPVTIEPREITPRIIREDNYGGLH.

Belongs to the complex I 30 kDa subunit family. As to quaternary structure, NDH-1 is composed of 14 different subunits. Subunits NuoB, C, D, E, F, and G constitute the peripheral sector of the complex.

The protein resides in the cell inner membrane. It catalyses the reaction a quinone + NADH + 5 H(+)(in) = a quinol + NAD(+) + 4 H(+)(out). NDH-1 shuttles electrons from NADH, via FMN and iron-sulfur (Fe-S) centers, to quinones in the respiratory chain. The immediate electron acceptor for the enzyme in this species is believed to be ubiquinone. Couples the redox reaction to proton translocation (for every two electrons transferred, four hydrogen ions are translocated across the cytoplasmic membrane), and thus conserves the redox energy in a proton gradient. This is NADH-quinone oxidoreductase subunit C from Albidiferax ferrireducens (strain ATCC BAA-621 / DSM 15236 / T118) (Rhodoferax ferrireducens).